Here is a 289-residue protein sequence, read N- to C-terminus: ATP synthase subunit a (289 aa).

Transmembrane regions (helical) follow at residues Ala-43–Phe-63, Ile-104–Ile-124, Leu-160–Ile-180, Ile-193–Ala-213, Val-232–Val-252, and Ala-259–Val-279.

This sequence belongs to the ATPase A chain family. F-type ATPases have 2 components, CF(1) - the catalytic core - and CF(0) - the membrane proton channel. CF(1) has five subunits: alpha(3), beta(3), gamma(1), delta(1), epsilon(1). CF(0) has three main subunits: a(1), b(2) and c(9-12). The alpha and beta chains form an alternating ring which encloses part of the gamma chain. CF(1) is attached to CF(0) by a central stalk formed by the gamma and epsilon chains, while a peripheral stalk is formed by the delta and b chains.

It is found in the cell inner membrane. In terms of biological role, key component of the proton channel; it plays a direct role in the translocation of protons across the membrane. The polypeptide is ATP synthase subunit a (Pseudomonas fluorescens (strain SBW25)).